A 520-amino-acid polypeptide reads, in one-letter code: 4-hydroxyphenylacetate 3-monooxygenase oxygenase component (520 aa).

Residues histidine 155–isoleucine 157 and threonine 196 each bind FAD.

It belongs to the FADH(2)-utilizing monooxygenase family. As to quaternary structure, homodimer. HPA 3-hydroxylase consists of a reductase component HpaC and an oxygenase component HpaB. Some form of interactions between the reductase and the oxygenase facilitate the transfer of FADH(-) to the oxygenase in P.aeruginosa, although interactions are not required in other species.

The enzyme catalyses 4-hydroxyphenylacetate + FADH2 + O2 = 3,4-dihydroxyphenylacetate + FAD + H2O + H(+). The protein operates within aromatic compound metabolism; 4-hydroxyphenylacetate degradation; pyruvate and succinate semialdehyde from 4-hydroxyphenylacetate: step 1/7. Functionally, oxygenase component of the 4-hydroxyphenylacetate (HPA) 3-hydroxylase. Catalyzes the hydroxylation of 4-hydroxyphenylacetate to form 3,4-dihydroxyphenylacetate, using FADH(-) provided by the reductase component HpaC to activate oxygen. To a lesser extent, can also use reduced FMN. In vitro, has hydroxylation activity toward tyrosol and various cinnamic acid derivatives, catalyzing the hydroxylation of p-coumaric acid, caffeic acid, ferulic acid, and coniferaldehyde. This is 4-hydroxyphenylacetate 3-monooxygenase oxygenase component from Pseudomonas aeruginosa (strain ATCC 15692 / DSM 22644 / CIP 104116 / JCM 14847 / LMG 12228 / 1C / PRS 101 / PAO1).